The sequence spans 319 residues: Exopolyphosphatase 2 (319 aa).

It belongs to the GppA/Ppx family. Homodimer.

The catalysed reaction is [phosphate](n) + H2O = [phosphate](n-1) + phosphate + H(+). Exopolyphosphatase activity is inhibited by ppGpp alarmones produced during the bacterial stringent response. Degradation of inorganic polyphosphates (polyP). Releases orthophosphate processively from the ends of the polyP chain. Prefers long-chain length polyphosphates as substrates. This is Exopolyphosphatase 2 from Mycobacterium tuberculosis (strain CDC 1551 / Oshkosh).